The chain runs to 329 residues: Ribonucleoside-diphosphate reductase subunit beta (329 aa).

3 residues coordinate Fe cation: Asp-66, Glu-97, and His-101. The active site involves Tyr-105. Fe cation is bound by residues Glu-164, Glu-198, and His-201.

Belongs to the ribonucleoside diphosphate reductase small chain family. In terms of assembly, tetramer of two alpha and two beta subunits. The cofactor is Fe cation.

The catalysed reaction is a 2'-deoxyribonucleoside 5'-diphosphate + [thioredoxin]-disulfide + H2O = a ribonucleoside 5'-diphosphate + [thioredoxin]-dithiol. In terms of biological role, provides the precursors necessary for DNA synthesis. Catalyzes the biosynthesis of deoxyribonucleotides from the corresponding ribonucleotides. The polypeptide is Ribonucleoside-diphosphate reductase subunit beta (bnrdF) (Bacillus pumilus (Bacillus mesentericus)).